Here is a 506-residue protein sequence, read N- to C-terminus: Sodium-coupled neutral amino acid symporter 2 (506 aa).

The disordered stretch occupies residues 1–23; it reads MKKAEMGRFNISPDEDSSSYSSN. Residues 1–76 lie on the Cytoplasmic side of the membrane; that stretch reads MKKAEMGRFN…HPGTTSFGMS (76 aa). The regulates protein turnover upon amino acid deprivation stretch occupies residues 1-96; sequence MKKAEMGRFN…SGILGLSYAM (96 aa). Ser12, Ser21, Ser22, and Ser55 each carry phosphoserine. The chain crosses the membrane as a helical span at residues 77–96; the sequence is VFNLSNAIVGSGILGLSYAM. Asn82 lines the Na(+) pocket. Residues 97–102 are Extracellular-facing; that stretch reads ANTGIA. The helical transmembrane segment at 103–123 threads the bilayer; that stretch reads LFIILLTFVSIFSLYSVHLLL. Over 124-158 the chain is Cytoplasmic; it reads KTANEGGSLLYEQLGYKAFGLVGKLAASGSITMQN. A helical transmembrane segment spans residues 159–177; that stretch reads IGAMSSYLFIVKYELPLVI. Residues 178–188 are Extracellular-facing; it reads QALTNIEDKTG. A helical transmembrane segment spans residues 189–209; that stretch reads LWYLNGNYLVLLVSLVVILPL. At 210-217 the chain is on the cytoplasmic side; that stretch reads SLFRNLGY. Residues 218–238 traverse the membrane as a helical segment; it reads LGYTSGLSLLCMVFFLIVVIC. The Extracellular segment spans residues 239-292; it reads KKFQVPCPVEAALIINETINTTLTQPTALVPALSHNVTENDSCRPHYFIFNSQT. Cys245 and Cys281 are disulfide-bonded. 2 N-linked (GlcNAc...) asparagine glycosylation sites follow: Asn258 and Asn274. Residues 293 to 313 traverse the membrane as a helical segment; that stretch reads VYAVPILIFSFVCHPAVLPIY. Topologically, residues 314 to 329 are cytoplasmic; sequence EELKDRSRRRMMNVSK. The chain crosses the membrane as a helical span at residues 330-350; that stretch reads ISFFAMFLMYLLAALFGYLTF. At 351–371 the chain is on the extracellular side; that stretch reads YEHVESELLHTYSSILGTDIL. The helical transmembrane segment at 372–392 threads the bilayer; that stretch reads LLIVRLAVLMAVTLTVPVVIF. Thr386 contributes to the Na(+) binding site. Topologically, residues 393–413 are cytoplasmic; the sequence is PIRSSVTHLLCASKDFSWWRH. The chain crosses the membrane as a helical span at residues 414–434; the sequence is SLITVSILAFTNLLVIFVPTI. The Extracellular portion of the chain corresponds to 435-436; sequence RD. Residues 437 to 457 form a helical membrane-spanning segment; it reads IFGFIGASAASMLIFILPSAF. At 458 to 472 the chain is on the cytoplasmic side; that stretch reads YIKLVKKEPMKSVQK. The chain crosses the membrane as a helical span at residues 473-495; sequence IGALFFLLSGVLVMTGSMALIVL. Residues 496 to 506 are Extracellular-facing; the sequence is DWVHNAPGGGH.

Belongs to the amino acid/polyamine transporter 2 family. In terms of processing, polyubiquitination by NEDD4L regulates the degradation and the activity of SLC38A2.

The protein resides in the cell membrane. It catalyses the reaction L-alanine(in) + Na(+)(in) = L-alanine(out) + Na(+)(out). It carries out the reaction glycine(in) + Na(+)(in) = glycine(out) + Na(+)(out). The catalysed reaction is L-serine(in) + Na(+)(in) = L-serine(out) + Na(+)(out). The enzyme catalyses L-proline(in) + Na(+)(in) = L-proline(out) + Na(+)(out). It catalyses the reaction L-methionine(in) + Na(+)(in) = L-methionine(out) + Na(+)(out). It carries out the reaction L-histidine(in) + Na(+)(in) = L-histidine(out) + Na(+)(out). The catalysed reaction is L-asparagine(in) + Na(+)(in) = L-asparagine(out) + Na(+)(out). The enzyme catalyses L-glutamine(in) + Na(+)(in) = L-glutamine(out) + Na(+)(out). It catalyses the reaction L-threonine(in) + Na(+)(in) = L-threonine(out) + Na(+)(out). It carries out the reaction L-leucine(in) + Na(+)(in) = L-leucine(out) + Na(+)(out). The catalysed reaction is L-phenylalanine(in) + Na(+)(in) = L-phenylalanine(out) + Na(+)(out). Inhibited by N-methyl-D-glucamine. Inhibited by choline. Allosteric regulation of sodium ions binding by pH. Symporter that cotransports neutral amino acids and sodium ions from the extracellular to the intracellular side of the cell membrane. The transport is pH-sensitive, Li(+)-intolerant, electrogenic, driven by the Na(+) electrochemical gradient and cotransports of neutral amino acids and sodium ions with a stoichiometry of 1:1. May function in the transport of amino acids at the blood-brain barrier. May function in the transport of amino acids in the supply of maternal nutrients to the fetus through the placenta. Maintains a key metabolic glutamine/glutamate balance underpinning retrograde signaling by dendritic release of the neurotransmitter glutamate. Transports L-proline in differentiating osteoblasts for the efficient synthesis of proline-enriched proteins and provides proline essential for osteoblast differentiation and bone formation during bone development. This chain is Sodium-coupled neutral amino acid symporter 2, found in Pan paniscus (Pygmy chimpanzee).